Consider the following 290-residue polypeptide: Undecaprenyl-diphosphatase 2 (290 aa).

Transmembrane regions (helical) follow at residues 104–124 (WMVI…KDLI), 128–148 (LRNL…FILA), 174–194 (CLAL…GLFL), 205–225 (SFLL…PDAF), 237–257 (QLFV…AWLL), and 268–288 (FALW…FGVL).

It belongs to the UppP family.

It localises to the cell membrane. The catalysed reaction is di-trans,octa-cis-undecaprenyl diphosphate + H2O = di-trans,octa-cis-undecaprenyl phosphate + phosphate + H(+). Catalyzes the dephosphorylation of undecaprenyl diphosphate (UPP). Confers resistance to bacitracin. This chain is Undecaprenyl-diphosphatase 2, found in Corynebacterium jeikeium (strain K411).